The following is a 126-amino-acid chain: RxLR effector protein BLR31 (126 aa).

An N-terminal signal peptide occupies residues 1–22 (MLLSRAISVLALLACIRCGVHA). The short motif at 44 to 58 (RLLRTSVDFKDSEER) is the RxLR-dEER element.

It belongs to the RxLR effector family.

The protein localises to the secreted. Its subcellular location is the host cell. In terms of biological role, secreted effector that triggers a hypersensitive response (HR) in 3 Lactuca saligna accessions (CGN05947, CGN05310, CGN05304). The chain is RxLR effector protein BLR31 from Bremia lactucae (Lettuce downy mildew).